A 475-amino-acid polypeptide reads, in one-letter code: ATP synthase subunit beta, chloroplastic (475 aa).

Residue 155–162 (GGAGVGKT) coordinates ATP.

The protein belongs to the ATPase alpha/beta chains family. As to quaternary structure, F-type ATPases have 2 components, CF(1) - the catalytic core - and CF(0) - the membrane proton channel. CF(1) has five subunits: alpha(3), beta(3), gamma(1), delta(1), epsilon(1). CF(0) has four main subunits: a(1), b(1), b'(1) and c(9-12).

The protein localises to the plastid. The protein resides in the chloroplast thylakoid membrane. It catalyses the reaction ATP + H2O + 4 H(+)(in) = ADP + phosphate + 5 H(+)(out). Functionally, produces ATP from ADP in the presence of a proton gradient across the membrane. The catalytic sites are hosted primarily by the beta subunits. The sequence is that of ATP synthase subunit beta, chloroplastic from Ochrosphaera neapolitana.